Here is a 360-residue protein sequence, read N- to C-terminus: Photosystem II protein D1 2 (360 aa).

3 consecutive transmembrane segments (helical) span residues 29–46 (YVGWFGVLMIPTLLTATT), 118–133 (HFLIGVFCYMGREWEL), and 142–156 (WICVAFSAPVAAATA). His-118 is a binding site for chlorophyll a. Residue Tyr-126 coordinates pheophytin a. [CaMn4O5] cluster is bound by residues Asp-170 and Glu-189. A helical transmembrane segment spans residues 197 to 218 (FHMLGVAGVFGGSLFSAMHGSL). His-198 lines the chlorophyll a pocket. Residues His-215 and 264–265 (SF) each bind a quinone. His-215 is a Fe cation binding site. His-272 contacts Fe cation. The helical transmembrane segment at 274–288 (FLGAWPVVGIWFTAL) threads the bilayer. 4 residues coordinate [CaMn4O5] cluster: His-332, Glu-333, Asp-342, and Ala-344. Residues 345 to 360 (AGEQAPVALQAPAING) constitute a propeptide that is removed on maturation.

Belongs to the reaction center PufL/M/PsbA/D family. PSII is composed of 1 copy each of membrane proteins PsbA, PsbB, PsbC, PsbD, PsbE, PsbF, PsbH, PsbI, PsbJ, PsbK, PsbL, PsbM, PsbT, PsbX, PsbY, PsbZ, Psb30/Ycf12, peripheral proteins PsbO, CyanoQ (PsbQ), PsbU, PsbV and a large number of cofactors. It forms dimeric complexes. Requires The D1/D2 heterodimer binds P680, chlorophylls that are the primary electron donor of PSII, and subsequent electron acceptors. It shares a non-heme iron and each subunit binds pheophytin, quinone, additional chlorophylls, carotenoids and lipids. D1 provides most of the ligands for the Mn4-Ca-O5 cluster of the oxygen-evolving complex (OEC). There is also a Cl(-1) ion associated with D1 and D2, which is required for oxygen evolution. The PSII complex binds additional chlorophylls, carotenoids and specific lipids. as cofactor. In terms of processing, tyr-161 forms a radical intermediate that is referred to as redox-active TyrZ, YZ or Y-Z. C-terminally processed by CtpA; processing is essential to allow assembly of the oxygen-evolving complex and thus photosynthetic growth.

The protein localises to the cellular thylakoid membrane. It catalyses the reaction 2 a plastoquinone + 4 hnu + 2 H2O = 2 a plastoquinol + O2. Photosystem II (PSII) is a light-driven water:plastoquinone oxidoreductase that uses light energy to abstract electrons from H(2)O, generating O(2) and a proton gradient subsequently used for ATP formation. It consists of a core antenna complex that captures photons, and an electron transfer chain that converts photonic excitation into a charge separation. The D1/D2 (PsbA/PsbD) reaction center heterodimer binds P680, the primary electron donor of PSII as well as several subsequent electron acceptors. The protein is Photosystem II protein D1 2 of Picosynechococcus sp. (strain ATCC 27264 / PCC 7002 / PR-6) (Agmenellum quadruplicatum).